An 885-amino-acid polypeptide reads, in one-letter code: Translation initiation factor IF-2 (885 aa).

The segment at 1 to 295 (MTDNKDDKTI…EKFKRSQMQE (295 aa)) is disordered. A compositionally biased stretch (low complexity) spans 63 to 77 (PVAAAPAAARPAEQR). Pro residues predominate over residues 78-94 (PMPPQPSGRPAPQPQPH). The span at 130–183 (RDAEEAKRRAEEEVRRRREEEERIAREKEEAARRAAEEAARPAVEAEKVEEKVE) shows a compositional bias: basic and acidic residues. The span at 184–201 (AATPAVAETRPLSERPAP) shows a compositional bias: low complexity. The tr-type G domain occupies 383–550 (ARPPIVTIMG…AILLQSEILD (168 aa)). The segment at 392-399 (GHVDHGKT) is G1. 392–399 (GHVDHGKT) is a GTP binding site. The G2 stretch occupies residues 417-421 (GITQH). The segment at 438-441 (DTPG) is G3. Residues 438–442 (DTPGH) and 492–495 (NKID) contribute to the GTP site. Positions 492–495 (NKID) are G4. The interval 528 to 530 (SAK) is G5.

The protein belongs to the TRAFAC class translation factor GTPase superfamily. Classic translation factor GTPase family. IF-2 subfamily.

Its subcellular location is the cytoplasm. Functionally, one of the essential components for the initiation of protein synthesis. Protects formylmethionyl-tRNA from spontaneous hydrolysis and promotes its binding to the 30S ribosomal subunits. Also involved in the hydrolysis of GTP during the formation of the 70S ribosomal complex. The sequence is that of Translation initiation factor IF-2 from Sinorhizobium medicae (strain WSM419) (Ensifer medicae).